The chain runs to 838 residues: Shutoff protein (838 aa).

The tract at residues 1 to 102 (MEDQHSAASE…EQEEDSPDRY (102 aa)) is disordered. The span at 18-35 (TLPPPPPPPPPPTSPPPS) shows a compositional bias: pro residues. Residues 52–65 (TCSSSSSSSASSEC) show a composition bias toward low complexity. Residues 291-353 (LMQTLLVRRA…ACMVTVQLHC (63 aa)) are binding to host EIF4G. Positions 356–474 (TFLTSREMVR…SLWTGFDERT (119 aa)) constitute an RRM domain. Tyr373 and Tyr690 each carry phosphotyrosine; by host. The tract at residues 693–838 (PHTGEELNTA…QELRRPQRGS (146 aa)) is disordered. Over residues 701–710 (TAAPSTAHHA) the composition is skewed to low complexity. Composition is skewed to basic and acidic residues over residues 737–746 (SYADRVRSEL) and 770–787 (HSRDAARRRGSQQRDQRQ). Residues 813 to 829 (QALLHQQQQQQEHQPAQ) are compositionally biased toward low complexity.

This sequence belongs to the adenoviridae shutoff protein family. As to quaternary structure, monomer. Interacts with hexon protein; this interaction allows chaperoning and trimerization of hexon proteins. Interacts (via N-terminus) with host initiation factor EIF4G (via C-terminus). Interacts (via RRM domain) with viral mRNAs that contain the tripartite leader; this interaction allows ribosome shunting and expression of viral late mRNAs. Might be cleaved by the viral protease. Post-translationally, phosphorylated. Tyrosine phosphorylation enhances preferential binding to tripartite leader mRNAs and allows ribosome shunting. In terms of processing, methylated. Asymmetric dimethylation by host PRMT1 of the Arg/Gly-rich region may regulate shutoff protein binding to hexon and promote the capsid assembly in the nucleus.

It localises to the host cytoplasm. Protein that inhibits host translation while promoting late viral translation by ribosome shunting. Blocks host cap-dependent translation by binding to eIF4G, displacing MKNK1 from cap initiation complexes and preventing EIF4E phosphorylation. Binds to the tripartite leader sequence of viral late mRNAs and recruits host eIF4G, PABPC1/poly-A binding protein and 40S ribosomes subunits on viral mRNAs, allowing ribosome shunting and efficient translation of late viral mRNAs even though conventional translation via ribosome scanning from the cap has been shut off in the host cell. During assembly, acts as a chaperone protein that helps hexon proteins assembly into trimers. This is Shutoff protein from Porcine adenovirus A serotype 3 (PAdV-3).